The chain runs to 155 residues: Transcriptional repressor NrdR (155 aa).

The tract at residues 1 to 24 (MRCPYCGHEDSQVKDSRPTEDGAA) is disordered. A zinc finger lies at 3 to 34 (CPYCGHEDSQVKDSRPTEDGAAIRRRRQCEDC). Residues 7-24 (GHEDSQVKDSRPTEDGAA) show a composition bias toward basic and acidic residues. Residues 49-139 (VVVIKAGGTR…VYRDFTEARD (91 aa)) enclose the ATP-cone domain.

The protein belongs to the NrdR family. Zn(2+) serves as cofactor.

Negatively regulates transcription of bacterial ribonucleotide reductase nrd genes and operons by binding to NrdR-boxes. The polypeptide is Transcriptional repressor NrdR (Sphingopyxis alaskensis (strain DSM 13593 / LMG 18877 / RB2256) (Sphingomonas alaskensis)).